The following is a 445-amino-acid chain: tRNA-2-methylthio-N(6)-dimethylallyladenosine synthase (445 aa).

Positions 9–125 constitute an MTTase N-terminal domain; it reads LKYRILTYGC…LPYLIARAKE (117 aa). [4Fe-4S] cluster-binding residues include Cys-18, Cys-54, Cys-88, Cys-162, Cys-166, and Cys-169. The Radical SAM core domain occupies 148–378; the sequence is RKPGLSAFVN…NRRQYQIATE (231 aa). A TRAM domain is found at 381–444; the sequence is QELQGSIQEV…TFSLFGEIFN (64 aa).

The protein belongs to the methylthiotransferase family. MiaB subfamily. As to quaternary structure, monomer. It depends on [4Fe-4S] cluster as a cofactor.

Its subcellular location is the cytoplasm. The enzyme catalyses N(6)-dimethylallyladenosine(37) in tRNA + (sulfur carrier)-SH + AH2 + 2 S-adenosyl-L-methionine = 2-methylsulfanyl-N(6)-dimethylallyladenosine(37) in tRNA + (sulfur carrier)-H + 5'-deoxyadenosine + L-methionine + A + S-adenosyl-L-homocysteine + 2 H(+). In terms of biological role, catalyzes the methylthiolation of N6-(dimethylallyl)adenosine (i(6)A), leading to the formation of 2-methylthio-N6-(dimethylallyl)adenosine (ms(2)i(6)A) at position 37 in tRNAs that read codons beginning with uridine. The chain is tRNA-2-methylthio-N(6)-dimethylallyladenosine synthase from Syntrophomonas wolfei subsp. wolfei (strain DSM 2245B / Goettingen).